Reading from the N-terminus, the 231-residue chain is Orotidine 5'-phosphate decarboxylase (231 aa).

Residues D11, K32, 59–68, T118, R180, Q189, G209, and R210 each bind substrate; that span reads DLKFHDIPNT. Residue K61 is the Proton donor of the active site.

Belongs to the OMP decarboxylase family. Type 1 subfamily. As to quaternary structure, homodimer.

The enzyme catalyses orotidine 5'-phosphate + H(+) = UMP + CO2. It functions in the pathway pyrimidine metabolism; UMP biosynthesis via de novo pathway; UMP from orotate: step 2/2. Functionally, catalyzes the decarboxylation of orotidine 5'-monophosphate (OMP) to uridine 5'-monophosphate (UMP). This chain is Orotidine 5'-phosphate decarboxylase, found in Synechocystis sp. (strain ATCC 27184 / PCC 6803 / Kazusa).